The sequence spans 535 residues: Glutamate--cysteine ligase (535 aa).

Belongs to the glutamate--cysteine ligase type 1 family. Type 1 subfamily.

It catalyses the reaction L-cysteine + L-glutamate + ATP = gamma-L-glutamyl-L-cysteine + ADP + phosphate + H(+). It participates in sulfur metabolism; glutathione biosynthesis; glutathione from L-cysteine and L-glutamate: step 1/2. The chain is Glutamate--cysteine ligase from Pseudomonas savastanoi pv. phaseolicola (strain 1448A / Race 6) (Pseudomonas syringae pv. phaseolicola (strain 1448A / Race 6)).